A 406-amino-acid polypeptide reads, in one-letter code: NAC transcription factor NAM-1 (406 aa).

The span at 1–11 (MGSPDSSSGSA) shows a compositional bias: polar residues. The interval 1–40 (MGSPDSSSGSAQKPPRHQHQHQPPPPRRQGSAPELPPGFR) is disordered. An NAC domain is found at 35-204 (LPPGFRFHPT…DWVLCRIYKK (170 aa)). Residues 137–210 (VGVKKALVFY…IYKKTSKAAA (74 aa)) mediate DNA binding.

The protein localises to the nucleus. Its function is as follows. Transcription factor of the NAC family associated with the grain protein content (GPC). Accelerates senescence and increases nutrient remobilization from leaves to developing grains. Sequences of 11 European varieties of H.vulgare tested belongs to the same haplotype while the sequence found in H.spontaneum, an ancestor of the cultivated H.vulgare which has a higher GPC, belongs to an other haplotype. This Hordeum vulgare subsp. vulgare (Domesticated barley) protein is NAC transcription factor NAM-1 (NAM-1).